Here is a 536-residue protein sequence, read N- to C-terminus: Probable pectinesterase/pectinesterase inhibitor 59 (536 aa).

A signal peptide spans 1-30 (MNMMMQKLSILFLHLILLVLLCVHPLTTVA). Residues 31–183 (DRNSTDWCDK…SHLISNCLAV (153 aa)) are pectinesterase inhibitor 59. N-linked (GlcNAc...) asparagine glycans are attached at residues N33, N91, N116, N159, and N195. Residues 221-522 (NLVVAKDGSG…FTVGKFIAGT (302 aa)) are pectinesterase 59. 2 residues coordinate substrate: T298 and Q328. The Proton donor; for pectinesterase activity role is filled by D351. The cysteines at positions 365 and 385 are disulfide-linked. The Nucleophile; for pectinesterase activity role is filled by D372. Residues R440 and W442 each contribute to the substrate site.

It in the N-terminal section; belongs to the PMEI family. This sequence in the C-terminal section; belongs to the pectinesterase family. In terms of tissue distribution, expressed in siliques.

It is found in the secreted. It localises to the cell wall. The enzyme catalyses [(1-&gt;4)-alpha-D-galacturonosyl methyl ester](n) + n H2O = [(1-&gt;4)-alpha-D-galacturonosyl](n) + n methanol + n H(+). Its pathway is glycan metabolism; pectin degradation; 2-dehydro-3-deoxy-D-gluconate from pectin: step 1/5. Functionally, acts in the modification of cell walls via demethylesterification of cell wall pectin. This chain is Probable pectinesterase/pectinesterase inhibitor 59 (PME59), found in Arabidopsis thaliana (Mouse-ear cress).